We begin with the raw amino-acid sequence, 177 residues long: Retrograde regulation protein 1 (177 aa).

A disordered region spans residues 1-24 (MSSIPAGTDPGSCGANFKNDRKRR). In terms of domain architecture, bHLH spans 11–96 (GSCGANFKND…TQAVEYISHL (86 aa)). Phosphoserine occurs at positions 50 and 52. Disordered stretches follow at residues 52–82 (SNDT…KPNK) and 147–177 (LAAT…GNGS). Thr-60 is subject to Phosphothreonine. The span at 168 to 177 (GGYGEYGNGS) shows a compositional bias: gly residues.

Binds DNA as a heterodimer with RTG3.

It localises to the nucleus. Its function is as follows. Required for a novel path of interorganelle communication between mitochondria, peroxisomes and the nucleus, thereby maintaining a functional metabolic interaction between the tricarboxylic acid and glyoxylate cycles. Transcription factor that regulates CIT2 gene expression. Binds to two identical sites oriented as inverted repeats 28 bp apart in a regulatory upstream activation sequence element (UASR) in the CIT2 promoter. The core binding site is 5'-GGTCAC-3'. The chain is Retrograde regulation protein 1 (RTG1) from Saccharomyces cerevisiae (strain ATCC 204508 / S288c) (Baker's yeast).